Here is a 188-residue protein sequence, read N- to C-terminus: Large ribosomal subunit protein eL18 (188 aa).

Residue lysine 119 forms a Glycyl lysine isopeptide (Lys-Gly) (interchain with G-Cter in SUMO2) linkage. A Phosphoserine modification is found at serine 130. The segment at 150–188 is disordered; it reads RHFGKAPGTPHSHTKPYVRSKGRKFERARGRRASRGYKN. Residue threonine 158 is modified to Phosphothreonine. 2 stretches are compositionally biased toward basic residues: residues 161 to 171 and 178 to 188; these read SHTKPYVRSKG and RGRRASRGYKN. Lysine 164 participates in a covalent cross-link: Glycyl lysine isopeptide (Lys-Gly) (interchain with G-Cter in SUMO2).

It belongs to the eukaryotic ribosomal protein eL18 family. In terms of assembly, component of the large ribosomal subunit.

It is found in the cytoplasm. The protein resides in the cytosol. The protein localises to the rough endoplasmic reticulum. Functionally, component of the large ribosomal subunit. The ribosome is a large ribonucleoprotein complex responsible for the synthesis of proteins in the cell. In Mus musculus (Mouse), this protein is Large ribosomal subunit protein eL18 (Rpl18).